The following is a 347-amino-acid chain: MIKAYFGAETFTLNKDFAYILVIGTTDVSLIPGLTIAGATPELTHFTPAADAEYVILGKCKSINTIPVSPTGIPTPALLTRASLSFTKSLKIVVNAGSRITPKIPYIDLQGEPGKDIRKQALSIEKVNIIIENGIKLGEELSNEYELIMIGESIPAGTTTAMATLLALGYDAMDKVSSASPDNPKELKRKVVEEALRNLPTDPLQRLAKVSDPVLLGVAGISLGFRGKILLAGGTQMTAAAAIVNEFDKSKLKDIIIGTTKWIVEDKSADMLSLAKQVGVKVLASMLDLSISIHEGIRTYEKGYVKEGVGAGGSTIMAFIRGVSNSTLVRKIDELYSELVGSNNLNT.

This sequence belongs to the UPF0284 family.

This Saccharolobus solfataricus (strain ATCC 35092 / DSM 1617 / JCM 11322 / P2) (Sulfolobus solfataricus) protein is UPF0284 protein SSO2213.